The sequence spans 309 residues: Dihydroorotate dehydrogenase B (NAD(+)), catalytic subunit (309 aa).

Residues serine 21 and 45-46 (KA) each bind FMN. Residues lysine 45 and 69-73 (NAIGL) contribute to the substrate site. FMN is bound by residues asparagine 99 and asparagine 127. Asparagine 127 serves as a coordination point for substrate. The Nucleophile role is filled by cysteine 130. Lysine 165 and isoleucine 191 together coordinate FMN. Substrate is bound at residue 192-193 (NT). Residues glycine 217, 243-244 (GG), and 265-266 (GT) each bind FMN.

The protein belongs to the dihydroorotate dehydrogenase family. Type 1 subfamily. Heterotetramer of 2 PyrK and 2 PyrD type B subunits. The cofactor is FMN.

The protein localises to the cytoplasm. The enzyme catalyses (S)-dihydroorotate + NAD(+) = orotate + NADH + H(+). It participates in pyrimidine metabolism; UMP biosynthesis via de novo pathway; orotate from (S)-dihydroorotate (NAD(+) route): step 1/1. Catalyzes the conversion of dihydroorotate to orotate with NAD(+) as electron acceptor. In Exiguobacterium sibiricum (strain DSM 17290 / CCUG 55495 / CIP 109462 / JCM 13490 / 255-15), this protein is Dihydroorotate dehydrogenase B (NAD(+)), catalytic subunit (pyrD).